Here is a 381-residue protein sequence, read N- to C-terminus: Magnesium transporter MRS2-I (381 aa).

The next 2 helical transmembrane spans lie at 316-336 (LFLS…GIFG) and 353-373 (WVVL…VAYA). Positions 336 to 338 (GMN) match the Required for magnesium transport activity motif.

Belongs to the CorA metal ion transporter (MIT) (TC 1.A.35.5) family.

It localises to the membrane. In terms of biological role, magnesium transporter that may mediate the influx of magnesium. The sequence is that of Magnesium transporter MRS2-I (MRS2-I) from Oryza sativa subsp. indica (Rice).